The primary structure comprises 247 residues: Fibroblast growth factor 14 (247 aa).

Disordered stretches follow at residues 1–38 (MAAA…KNRG) and 214–247 (VGET…SKTT). Over residues 15–25 (QAREQHWDRPS) the composition is skewed to basic and acidic residues.

This sequence belongs to the heparin-binding growth factors family. As to quaternary structure, interacts with SCN8A. Nervous system.

It localises to the nucleus. Probably involved in nervous system development and function. This Homo sapiens (Human) protein is Fibroblast growth factor 14 (FGF14).